Consider the following 217-residue polypeptide: Probable transaldolase (217 aa).

Residue Lys-83 is the Schiff-base intermediate with substrate of the active site.

This sequence belongs to the transaldolase family. Type 3B subfamily.

It is found in the cytoplasm. It catalyses the reaction D-sedoheptulose 7-phosphate + D-glyceraldehyde 3-phosphate = D-erythrose 4-phosphate + beta-D-fructose 6-phosphate. It participates in carbohydrate degradation; pentose phosphate pathway; D-glyceraldehyde 3-phosphate and beta-D-fructose 6-phosphate from D-ribose 5-phosphate and D-xylulose 5-phosphate (non-oxidative stage): step 2/3. In terms of biological role, transaldolase is important for the balance of metabolites in the pentose-phosphate pathway. The polypeptide is Probable transaldolase (Maricaulis maris (strain MCS10) (Caulobacter maris)).